Reading from the N-terminus, the 439-residue chain is U1 small nuclear ribonucleoprotein 70 kDa (439 aa).

Thr-2 is modified (N-acetylthreonine). The disordered stretch occupies residues 48–79 (FEDPRDAPPPTRAETREERMERKRREKIERRQ). Basic and acidic residues predominate over residues 60–79 (AETREERMERKRREKIERRQ). The segment at 92–202 (HNDPNAQGDA…GGGLGGTRRG (111 aa)) is required for interaction with U1 RNA. One can recognise an RRM domain in the interval 103–181 (KTLFVARVNY…RRVLVDVERG (79 aa)). Lys-118 is subject to N6-acetyllysine. Tyr-126 carries the phosphotyrosine modification. A disordered region spans residues 187–439 (WRPRRLGGGL…NGYLMEAAPE (253 aa)). Over residues 192–201 (LGGGLGGTRR) the composition is skewed to gly residues. The span at 207–254 (NIRHSGRDDTSRYDERPGPSPLPHRDRDRDRERERRERSRERDKERER) shows a compositional bias: basic and acidic residues. A phosphoserine mark is found at Ser-226 and Ser-268. Over residues 255 to 268 (RRSRSRDRRRRSRS) the composition is skewed to basic residues. 2 stretches are compositionally biased toward basic and acidic residues: residues 269-286 (RDKE…DKDR) and 294-310 (RSRE…EELR). Ser-323 is subject to Phosphoserine. The span at 346 to 394 (PEEKGRDRDRDRRRSHRSERERRRDRDRDRDREHKRGERGGDRGRDEAR) shows a compositional bias: basic and acidic residues. Lys-349 is covalently cross-linked (Glycyl lysine isopeptide (Lys-Gly) (interchain with G-Cter in SUMO2)). The segment covering 395–410 (GGGGGGQDNGLEGLGN) has biased composition (gly residues).

As to quaternary structure, component of the U1 snRNP. The U1 snRNP is composed of the U1 snRNA and the 7 core Sm proteins SNRPB, SNRPD1, SNRPD2, SNRPD3, SNRPE, SNRPF and SNRPG that assemble in a heptameric protein ring on the Sm site of the small nuclear RNA to form the core snRNP, and at least three U1 snRNP-specific proteins SNRNP70/U1-70K, SNRPA/U1-A and SNRPC/U1-C. Interacts with SCNM1. Found in a pre-mRNA splicing complex with SFRS4, SFRS5, SNRNP70, SNRPA1, SRRM1 and SRRM2. Found in a pre-mRNA exonic splicing enhancer (ESE) complex with SNRNP70, SNRPA1, SRRM1 and TRA2B/SFRS10. Interacts with dephosphorylated SFRS13A and SFPQ. Interacts with NUDT21/CPSF5, CPSF6, SCAF11, and ZRANB2. Interacts with GEMIN5. Interacts with FUS. In terms of processing, extensively phosphorylated on serine residues in the C-terminal region.

The protein resides in the nucleus speckle. It is found in the nucleus. It localises to the nucleoplasm. Functionally, component of the spliceosomal U1 snRNP, which is essential for recognition of the pre-mRNA 5' splice-site and the subsequent assembly of the spliceosome. SNRNP70 binds to the loop I region of U1-snRNA. The sequence is that of U1 small nuclear ribonucleoprotein 70 kDa (SNRNP70) from Bos taurus (Bovine).